We begin with the raw amino-acid sequence, 350 residues long: Biotin synthase (350 aa).

In terms of domain architecture, Radical SAM core spans N41 to R268. Residues C56, C60, and C63 each coordinate [4Fe-4S] cluster. The [2Fe-2S] cluster site is built by C100, C131, C191, and R263.

The protein belongs to the radical SAM superfamily. Biotin synthase family. Homodimer. [4Fe-4S] cluster is required as a cofactor. Requires [2Fe-2S] cluster as cofactor.

The enzyme catalyses (4R,5S)-dethiobiotin + (sulfur carrier)-SH + 2 reduced [2Fe-2S]-[ferredoxin] + 2 S-adenosyl-L-methionine = (sulfur carrier)-H + biotin + 2 5'-deoxyadenosine + 2 L-methionine + 2 oxidized [2Fe-2S]-[ferredoxin]. Its pathway is cofactor biosynthesis; biotin biosynthesis; biotin from 7,8-diaminononanoate: step 2/2. Its function is as follows. Catalyzes the conversion of dethiobiotin (DTB) to biotin by the insertion of a sulfur atom into dethiobiotin via a radical-based mechanism. This Shewanella putrefaciens (strain CN-32 / ATCC BAA-453) protein is Biotin synthase.